A 57-amino-acid polypeptide reads, in one-letter code: Large ribosomal subunit protein bL33 (57 aa).

It belongs to the bacterial ribosomal protein bL33 family.

In Bifidobacterium longum (strain NCC 2705), this protein is Large ribosomal subunit protein bL33.